We begin with the raw amino-acid sequence, 227 residues long: Triosephosphate isomerase (227 aa).

Residue 9–11 participates in substrate binding; the sequence is NFK. His-93 serves as the catalytic Electrophile. Residue Glu-141 is the Proton acceptor of the active site. Substrate-binding positions include Ile-146, Gly-180, and 201–202; that span reads AS.

The protein belongs to the triosephosphate isomerase family. As to quaternary structure, homotetramer; dimer of dimers.

It is found in the cytoplasm. It carries out the reaction D-glyceraldehyde 3-phosphate = dihydroxyacetone phosphate. The protein operates within carbohydrate biosynthesis; gluconeogenesis. It participates in carbohydrate degradation; glycolysis; D-glyceraldehyde 3-phosphate from glycerone phosphate: step 1/1. In terms of biological role, involved in the gluconeogenesis. Catalyzes stereospecifically the conversion of dihydroxyacetone phosphate (DHAP) to D-glyceraldehyde-3-phosphate (G3P). The protein is Triosephosphate isomerase of Saccharolobus solfataricus (strain ATCC 35092 / DSM 1617 / JCM 11322 / P2) (Sulfolobus solfataricus).